Consider the following 300-residue polypeptide: Protease HtpX homolog (300 aa).

A run of 2 helical transmembrane segments spans residues 5–25 (IFLL…FISL) and 41–61 (TLFL…LAIS). Residue H146 participates in Zn(2+) binding. E147 is a catalytic residue. Residue H150 participates in Zn(2+) binding. 2 helical membrane-spanning segments follow: residues 161–181 (LLQG…GFFV) and 196–216 (IGFY…ASII). Residue E225 participates in Zn(2+) binding.

This sequence belongs to the peptidase M48B family. Zn(2+) serves as cofactor.

The protein resides in the cell inner membrane. In Methylacidiphilum infernorum (isolate V4) (Methylokorus infernorum (strain V4)), this protein is Protease HtpX homolog.